Consider the following 316-residue polypeptide: N-acetylmuramic acid 6-phosphate etherase (316 aa).

In terms of domain architecture, SIS spans 68-231 (ITDRLRSGGR…STCAMVRLGK (164 aa)). Glutamate 96 functions as the Proton donor in the catalytic mechanism. Glutamate 127 is a catalytic residue.

This sequence belongs to the GCKR-like family. MurNAc-6-P etherase subfamily. As to quaternary structure, homodimer.

It carries out the reaction N-acetyl-D-muramate 6-phosphate + H2O = N-acetyl-D-glucosamine 6-phosphate + (R)-lactate. The protein operates within amino-sugar metabolism; N-acetylmuramate degradation. Specifically catalyzes the cleavage of the D-lactyl ether substituent of MurNAc 6-phosphate, producing GlcNAc 6-phosphate and D-lactate. This Prochlorococcus marinus (strain MIT 9303) protein is N-acetylmuramic acid 6-phosphate etherase.